The following is a 436-amino-acid chain: F-box/LRR-repeat protein 20 (436 aa).

The F-box domain occupies 22 to 68 (AVINKKLPKELLLRIFSFLDVVTLCRCAQVSRAWNVLALDGSNWQRI). 13 LRR repeats span residues 74–100 (QRDI…SLRG), 101–126 (CLGV…NLNG), 127–152 (CTKT…DLAS), 153–178 (CTSI…NISW), 179–204 (CDQV…FLKG), 205–230 (CTQL…NLQT), 231–256 (CLQI…CASG), 257–282 (CSNI…EVAR), 283–308 (CSQL…DLEE), 309–334 (CVQI…SLSH), 335–363 (CELI…ELDN), 364–388 (CPLI…ELYD), and 389–414 (CQQI…AYFA). Residue T417 is modified to Phosphothreonine. Position 421 is a phosphoserine (S421).

As to quaternary structure, interacts with SKP1 and CUL1.

Its subcellular location is the cytoplasm. Its function is as follows. Substrate-recognition component of the SCF (SKP1-CUL1-F-box protein)-type E3 ubiquitin ligase complex. Role in neural transmission. The chain is F-box/LRR-repeat protein 20 (FBXL20) from Bos taurus (Bovine).